Consider the following 640-residue polypeptide: Antigenic protein NP1 (640 aa).

The region spanning 1 to 288 (VQVSIGKCNH…SYVNIAHAFG (288 aa)) is the Peptidase M60 domain. One can recognise a PA14 domain in the interval 463–615 (LDPHQVEYEV…TDQSSVNVSK (153 aa)).

This chain is Antigenic protein NP1, found in Entamoeba histolytica.